We begin with the raw amino-acid sequence, 193 residues long: Acyl carrier protein phosphodiesterase (193 aa).

The protein belongs to the AcpH family.

It catalyses the reaction holo-[ACP] + H2O = apo-[ACP] + (R)-4'-phosphopantetheine + H(+). In terms of biological role, converts holo-ACP to apo-ACP by hydrolytic cleavage of the phosphopantetheine prosthetic group from ACP. This chain is Acyl carrier protein phosphodiesterase, found in Salmonella agona (strain SL483).